A 219-amino-acid polypeptide reads, in one-letter code: Ribose-5-phosphate isomerase A (219 aa).

Residues 28-31 (TGST), 81-84 (DGAD), and 94-97 (KGGG) each bind substrate. E103 serves as the catalytic Proton acceptor. Residue K121 coordinates substrate.

The protein belongs to the ribose 5-phosphate isomerase family. In terms of assembly, homodimer.

The catalysed reaction is aldehydo-D-ribose 5-phosphate = D-ribulose 5-phosphate. It functions in the pathway carbohydrate degradation; pentose phosphate pathway; D-ribose 5-phosphate from D-ribulose 5-phosphate (non-oxidative stage): step 1/1. Catalyzes the reversible conversion of ribose-5-phosphate to ribulose 5-phosphate. This is Ribose-5-phosphate isomerase A from Shewanella sp. (strain ANA-3).